The primary structure comprises 132 residues: MFDGIGFMELLLIGILGLVVLGPERLPVAVRSVTGWIRALKRMANSVKDELEQELKIEQLHADLKKAESKGLANLSPELQESIDQLKQAAQSVNRPYQLDESNEQEPKIAPPQANIAETPTQSGDTHSKNNG.

The helical transmembrane segment at 2-22 threads the bilayer; it reads FDGIGFMELLLIGILGLVVLG. Polar residues-rich tracts occupy residues 86–95 and 116–132; these read LKQAAQSVNR and IAETPTQSGDTHSKNNG. The interval 86-132 is disordered; it reads LKQAAQSVNRPYQLDESNEQEPKIAPPQANIAETPTQSGDTHSKNNG.

Belongs to the TatB family. In terms of assembly, the Tat system comprises two distinct complexes: a TatABC complex, containing multiple copies of TatA, TatB and TatC subunits, and a separate TatA complex, containing only TatA subunits. Substrates initially bind to the TatABC complex, which probably triggers association of the separate TatA complex to form the active translocon.

It localises to the cell inner membrane. In terms of biological role, part of the twin-arginine translocation (Tat) system that transports large folded proteins containing a characteristic twin-arginine motif in their signal peptide across membranes. Together with TatC, TatB is part of a receptor directly interacting with Tat signal peptides. TatB may form an oligomeric binding site that transiently accommodates folded Tat precursor proteins before their translocation. In Shewanella denitrificans (strain OS217 / ATCC BAA-1090 / DSM 15013), this protein is Sec-independent protein translocase protein TatB.